Reading from the N-terminus, the 245-residue chain is Uridylate kinase (245 aa).

ATP is bound at residue 12-15 (KLSG). Residues 20–25 (GEKGVG) are involved in allosteric activation by GTP. Gly-54 serves as a coordination point for UMP. Residues Gly-55 and Arg-59 each contribute to the ATP site. UMP is bound by residues Asp-74 and 135–142 (VGSPYFST). Positions 163, 169, and 172 each coordinate ATP.

This sequence belongs to the UMP kinase family. Homohexamer.

It localises to the cytoplasm. It carries out the reaction UMP + ATP = UDP + ADP. Its pathway is pyrimidine metabolism; CTP biosynthesis via de novo pathway; UDP from UMP (UMPK route): step 1/1. With respect to regulation, allosterically activated by GTP. Inhibited by UTP. Its function is as follows. Catalyzes the reversible phosphorylation of UMP to UDP. The polypeptide is Uridylate kinase (Streptococcus mutans serotype c (strain ATCC 700610 / UA159)).